Here is a 436-residue protein sequence, read N- to C-terminus: GTPase Der (436 aa).

EngA-type G domains follow at residues 4–167 and 175–351; these read PTIA…PNEE and IKFS…QSQN. GTP-binding positions include 10-17, 57-61, 119-122, 181-188, 229-233, and 294-297; these read GRPNVGKS, DTGGI, NKVD, DTAGM, and NKWD. The KH-like domain occupies 352–436; that stretch reads TRIPSAVLND…PIHLIARKRK (85 aa).

This sequence belongs to the TRAFAC class TrmE-Era-EngA-EngB-Septin-like GTPase superfamily. EngA (Der) GTPase family. As to quaternary structure, associates with the 50S ribosomal subunit.

Its function is as follows. GTPase that plays an essential role in the late steps of ribosome biogenesis. The protein is GTPase Der of Streptococcus sanguinis (strain SK36).